We begin with the raw amino-acid sequence, 130 residues long: Small ribosomal subunit protein uS11 (130 aa).

Belongs to the universal ribosomal protein uS11 family. Part of the 30S ribosomal subunit. Interacts with proteins S7 and S18. Binds to IF-3.

Functionally, located on the platform of the 30S subunit, it bridges several disparate RNA helices of the 16S rRNA. Forms part of the Shine-Dalgarno cleft in the 70S ribosome. This Shewanella baltica (strain OS223) protein is Small ribosomal subunit protein uS11.